We begin with the raw amino-acid sequence, 299 residues long: NAD kinase (299 aa).

Asp64 acts as the Proton acceptor in catalysis. NAD(+) contacts are provided by residues 64 to 65, 138 to 139, Arg149, Arg166, Asp168, 179 to 184, and Gln238; these read DG, ND, and TGYAVS.

The protein belongs to the NAD kinase family. Requires a divalent metal cation as cofactor.

The protein localises to the cytoplasm. It carries out the reaction NAD(+) + ATP = ADP + NADP(+) + H(+). Involved in the regulation of the intracellular balance of NAD and NADP, and is a key enzyme in the biosynthesis of NADP. Catalyzes specifically the phosphorylation on 2'-hydroxyl of the adenosine moiety of NAD to yield NADP. The protein is NAD kinase of Nitratidesulfovibrio vulgaris (strain ATCC 29579 / DSM 644 / CCUG 34227 / NCIMB 8303 / VKM B-1760 / Hildenborough) (Desulfovibrio vulgaris).